We begin with the raw amino-acid sequence, 576 residues long: MSATLLKQPLCTVVRQGKQSKVSGLNLLRLKAHLHRQHLSPSLIKLHSELKLDELQTDNTPDYVRLVLRSSVYDVINESPISQGVGLSSRLNTNVILKREDLLPVFSFKLRGAYNMIAKLDDSQRNQGVIACSAGNHAQGVAFAAKHLKIPATIVMPVCTPSIKYQNVSRLGSQVVLYGNDFDEAKAECAKLAEERGLTNIPPFDHPYVIAGQGTVAMEILRQVRTANKIGAVFVPVGGGGLIAGIGAYLKRVAPHIKIIGVETYDAATLHNSLQRNQRTPLPVVGTFADGTSVRMIGEETFRVAQQVVDEVVLVNTDEICAAVKDIFEDTRSIVEPSGALSVAGMKKYISTVHPEIDHTKNTYVPILSGANMNFDRLRFVSERAVLGEGKEVFMLVTLPDVPGAFKKMQKIIHPRSVTEFSYRYNEHRHESSSEVPKAYIYTSFSVVDREKEIKQVMQQLNALGFEAVDISDNELAKSHGRYLVGGASKVPNERIISFEFPERPGALTRFLGGLSDSWNLTLFHYRNHGADIGKVLAGISVPPRENLTFQKFLEDLGYTYHDETDNTVYQKFLKY.

K109 carries the N6-(pyridoxal phosphate)lysine modification. ACT-like domains lie at 393-473 and 495-566; these read VFML…DISD and RIIS…DETD.

The protein belongs to the serine/threonine dehydratase family. In terms of assembly, homotetramer. It depends on pyridoxal 5'-phosphate as a cofactor.

It localises to the mitochondrion. It catalyses the reaction L-threonine = 2-oxobutanoate + NH4(+). It participates in amino-acid biosynthesis; L-isoleucine biosynthesis; 2-oxobutanoate from L-threonine: step 1/1. Its activity is regulated as follows. Isoleucine allosterically inhibits while valine allosterically activates this enzyme. The polypeptide is Threonine dehydratase, mitochondrial (ILV1) (Saccharomyces cerevisiae (strain ATCC 204508 / S288c) (Baker's yeast)).